The sequence spans 1616 residues: MAYTQTATSSALLETVRGNNTLVNDLAKRRLYDTAVDEFNARDRRPKVNFSKVVSEEQTLIATKAYPEFQITFYNTQNAVHSLAGGLRSLELEYLMMQIPYGSLTYDIGGNFASHLFKGRAYVHCCMPNLDVRDIMRHEGQKDSIELYLSRLERGNKHVPNFQKEAFDRYAEMPNEVVCHDTFQTCRHSQECYTGRVYAIALHSIYDIPADEFGAALLRKNVHVCYAAFHFSENLLLEDSHVNLDEINACFQRDGDRLTFSFASESTLNYSHSYSNILKYVCKTYFPASNREVYMKEFLVTRVNTWFCKFSRIDTFLLYKGVAHKGVDSEQFYKAMEDAWHYKKTLAMCNSERILLEDSSSVNYWFPKMRDMVIVPLFDISLETSKRTRKEVLVSKDFVYTVLNHIRTYQAKALTYSNVLSFVESIRSRVIINGVTARSEWDVDKSLLQSLSMTFFLHTKLAVLKDDLLISKFALGPKTVSQHVWDEISLAFGNAFPSIKERLINRKLIKITENALEIRVPDLYVTFHDRLVSEYKMSVDMPVLDIRKKMEETEEMYNALSELSVLKNSDKFDVDVFSQMCQSLEVDPMTAAKVIVAVMSNESGLTLTFEQPTEANVALALQDSEKASDGALVVTSRDVEEPSIKGSMARGELQLAGLSGDVPESSYTRSEEIESLEQFHMATASSLIHKQMCSIVYTGPLKVQQMKNFIDSLVASLSAAVSNLVKILKDTAAIDLETRQKFGVLDVASKRWLVKPSAKNHAWGVVETHARKYHVALLEHDEFGIITCDNWRRVAVSSESVVYSDMAKLRTLRRLLKDGEPHVSSAKVVLVDGVPGCGKTKEILSRVNFEEDLILVPGRQAAEMIRRRANASGIIVATKDNVRTVDSFLMNYGKGARCQFKRLFIDEGLMLHTGCVNFLVEMSLCDIAYVYGDTQQIPYINRVTGFPYPAHFAKLEVDEVETRRTTLRCPADVTHFLNQRYEGHVMCTSSEKKSVSQEMVSGAASINPVSKPLKGKILTFTQSDKEALLSRGYADVHTVHEVQGETYADVSLVRLTPTPVSIIARDSPHVLVSLSRHTKSLKYYTVVMDPLVSIIRDLERVSSYLLDMYKVDAGTQXQLQVDSVFKNFNLFVAAPKTGDISDMQFYYDKCLPGNSTLLNNYDAVTMKLTDISLNVKDCILDMSKSVAAPKDVKPTLIPMVRTAAEMPRQTGLLENLVAMIKRNFNSPELSGVVDIENTASLVVDKFFDSYLLKEKRKPNKNFSLFSRESLNRWIAKQEQVTIGQLADFDFVDLPAVDQYRHMIKAQPKQKLDLSIQTEYPALQTIVYHSKKINAIFGPLFSELTRQLLDSIDSSRFLFFTRKTPAQIEDFFGDLDSHVPMDVLELDVSKYDKSQNEFHCAVEYEIWRRLGLEDFLAEVWKQGHRKTTLKDYTAGIKTCLWYQRKSGDVTTFIGNTVIIASCLASMLPMEKLIKGAFCGDDSLLYFPKGCEYPDIQQAANLMWNFEAKLFKKQYGYFCGRYVIHHDRGCIVYYDPLKLISKLGAKHIKDWDHLEEFRRSLCDVAESLNNCAYYTQLDDAVGEVHKTAPPGSFVYKSLVKYLSDKVLFRSLFLDGSSC.

The interval 50–458 is methyltransferase; it reads FSKVVSEEQT…QSLSMTFFLH (409 aa). One can recognise an Alphavirus-like MT domain in the interval 72–281; the sequence is TFYNTQNAVH…HSYSNILKYV (210 aa). The (+)RNA virus helicase ATP-binding domain occupies 801-963; sequence VVYSDMAKLR…KLEVDEVETR (163 aa). The helicase stretch occupies residues 830–1085; it reads LVDGVPGCGK…RHTKSLKYYT (256 aa). Residues 836–841, Arg-868, 967–968, Arg-1076, and 1097–1100 contribute to the ATP site; these read GCGKTK, LR, and DLER. Residues 964–1116 enclose the (+)RNA virus helicase C-terminal domain; sequence RTTLRCPADV…DMYKVDAGTQ (153 aa). The RdRp catalytic domain occupies 1380 to 1493; that stretch reads MDVLELDVSK…YFPKGCEYPD (114 aa).

This sequence belongs to the ssRNA positive-strand viruses RNA-directed RNA polymerase family. In terms of assembly, heterodimer of a large and a small subunit. May interact with the host proteins TOM1 and ARL8. Interacts via an ATP bridge, with host protein Tm-1 (e.g. tomato Tm-1 AC A7M6E7).

It catalyses the reaction RNA(n) + a ribonucleoside 5'-triphosphate = RNA(n+1) + diphosphate. It carries out the reaction ATP + H2O = ADP + phosphate + H(+). Its activity is regulated as follows. In resistant plants, is bound by host protein Tm-1 (e.g. tomato Tm-1 AC A7M6E7), thereby inhibiting replication complex activity. Functionally, is an RNA-dependent RNA polymerase active in viral RNA replication. Is a methyltransferase active in RNA capping and an RNA helicase. Methyltransferase displays a cytoplasmic capping enzyme activity. This function is necessary since all viral RNAs are synthesized in the cytoplasm, and host capping enzymes are restricted to the nucleus. Helicase region probably exhibits NTPase and RNA unwinding activities (Potential). It also acts as a suppressor of RNA-mediated gene silencing, also known as post-transcriptional gene silencing (PTGS), a mechanism of plant viral defense that limits the accumulation of viral RNAs. May mediate silencing suppression through either inhibition of HEN1-mediated siRNA or siRNA demethylation. This is Replicase large subunit from Tomato mosaic virus (strain L) (ToMV).